The following is a 129-amino-acid chain: UPF0047 protein Mb2586c (129 aa).

Belongs to the UPF0047 family.

In Mycobacterium bovis (strain ATCC BAA-935 / AF2122/97), this protein is UPF0047 protein Mb2586c.